We begin with the raw amino-acid sequence, 575 residues long: Arginine--tRNA ligase (575 aa).

The 'HIGH' region signature appears at 130–140; it reads ANPTGPMHVGH.

It belongs to the class-I aminoacyl-tRNA synthetase family. As to quaternary structure, monomer.

Its subcellular location is the cytoplasm. The enzyme catalyses tRNA(Arg) + L-arginine + ATP = L-arginyl-tRNA(Arg) + AMP + diphosphate. The protein is Arginine--tRNA ligase of Magnetococcus marinus (strain ATCC BAA-1437 / JCM 17883 / MC-1).